The sequence spans 398 residues: Argininosuccinate synthase (398 aa).

An ATP-binding site is contributed by 9–17 (AYSGGLDTS). L-citrulline is bound by residues tyrosine 87 and serine 92. ATP is bound at residue glycine 117. Residues threonine 119, asparagine 123, and aspartate 124 each coordinate L-aspartate. L-citrulline is bound at residue asparagine 123. L-citrulline-binding residues include arginine 127, serine 176, serine 185, glutamate 261, and tyrosine 273.

This sequence belongs to the argininosuccinate synthase family. Type 1 subfamily. Homotetramer.

It is found in the cytoplasm. It carries out the reaction L-citrulline + L-aspartate + ATP = 2-(N(omega)-L-arginino)succinate + AMP + diphosphate + H(+). Its pathway is amino-acid biosynthesis; L-arginine biosynthesis; L-arginine from L-ornithine and carbamoyl phosphate: step 2/3. The protein is Argininosuccinate synthase of Clostridium tetani (strain Massachusetts / E88).